The chain runs to 1226 residues: Phosphatidylinositol 3,4,5-trisphosphate 5-phosphatase 2B (1226 aa).

The region spanning 6–102 is the SH2 domain; that stretch reads WYHRDISRVR…GLVAPLLYPV (97 aa). Residues 106 to 144 are disordered; it reads SEANDESSDGDDEKPGSTFANSPPRAISPTATSPPSSSA. The span at 108-117 shows a compositional bias: acidic residues; sequence ANDESSDGDD. The segment covering 127 to 144 has biased composition (low complexity); that stretch reads SPPRAISPTATSPPSSSA. Positions 906 to 909 match the NPXY motif motif; sequence NPAY. Tyr-909 carries the post-translational modification Phosphotyrosine. Disordered regions lie at residues 945-964 and 985-1035; these read RVTG…DFTE and SSAA…LSGK. Low complexity predominate over residues 1011–1025; sequence HSSNSSLQLQSHKNN. One can recognise an SAM domain in the interval 1163–1226; that stretch reads GAPETVRELL…ILENLPKIWD (64 aa).

This sequence belongs to the inositol 1,4,5-trisphosphate 5-phosphatase family. Tyrosine phosphorylated by the members of the SRC family after exposure to a diverse array of extracellular stimuli.

It localises to the cytoplasm. Its subcellular location is the cytosol. It is found in the cytoskeleton. The protein localises to the membrane. The protein resides in the cell projection. It localises to the filopodium. Its subcellular location is the lamellipodium. It is found in the nucleus. The protein localises to the nucleus speckle. It catalyses the reaction a 1,2-diacyl-sn-glycero-3-phospho-(1D-myo-inositol-3,4,5-trisphosphate) + H2O = a 1,2-diacyl-sn-glycero-3-phospho-(1D-myo-inositol-3,4-bisphosphate) + phosphate. In terms of biological role, phosphatidylinositol (PtdIns) phosphatase that specifically hydrolyzes the 5-phosphate of phosphatidylinositol-3,4,5-trisphosphate (PtdIns(3,4,5)P3) to produce PtdIns(3,4)P2, thereby negatively regulating the PI3K (phosphoinositide 3-kinase) pathways. Plays a central role in regulation of PI3K-dependent insulin signaling, although the precise molecular mechanisms and signaling pathways remain unclear. Part of a signaling pathway that regulates actin cytoskeleton remodeling. Required for the maintenance and dynamic remodeling of actin structures as well as in endocytosis, having a major impact on ligand-induced EGFR internalization and degradation. Participates in regulation of cortical and submembraneous actin. Regulates cell adhesion and cell spreading. Acts as a negative regulator of the FC-gamma-RIIA receptor (FCGR2A). Mediates signaling from the FC-gamma-RIIB receptor (FCGR2B), playing a central role in terminating signal transduction from activating immune/hematopoietic cell receptor systems. May also hydrolyze PtdIns(1,3,4,5)P4, and could thus affect the levels of the higher inositol polyphosphates like InsP6. The sequence is that of Phosphatidylinositol 3,4,5-trisphosphate 5-phosphatase 2B (inppl1b) from Danio rerio (Zebrafish).